Consider the following 471-residue polypeptide: Glutamate--tRNA ligase (471 aa).

Positions P9–G19 match the 'HIGH' region motif. The Zn(2+) site is built by C98, C100, C125, and D127. The short motif at K237–R241 is the 'KMSKS' region element. K240 serves as a coordination point for ATP.

This sequence belongs to the class-I aminoacyl-tRNA synthetase family. Glutamate--tRNA ligase type 1 subfamily. As to quaternary structure, monomer. Requires Zn(2+) as cofactor.

The protein localises to the cytoplasm. It catalyses the reaction tRNA(Glu) + L-glutamate + ATP = L-glutamyl-tRNA(Glu) + AMP + diphosphate. In terms of biological role, catalyzes the attachment of glutamate to tRNA(Glu) in a two-step reaction: glutamate is first activated by ATP to form Glu-AMP and then transferred to the acceptor end of tRNA(Glu). This chain is Glutamate--tRNA ligase, found in Aeromonas salmonicida (strain A449).